The sequence spans 20 residues: Large ribosomal subunit protein uL10 (20 aa).

This sequence belongs to the universal ribosomal protein uL10 family. Part of the ribosomal stalk of the 50S ribosomal subunit. The N-terminus interacts with L11 and the large rRNA to form the base of the stalk. The C-terminus forms an elongated spine to which L12 dimers bind in a sequential fashion forming a multimeric L10(L12)X complex.

Its function is as follows. Forms part of the ribosomal stalk, playing a central role in the interaction of the ribosome with GTP-bound translation factors. The chain is Large ribosomal subunit protein uL10 (rplJ) from Citrobacter freundii.